The sequence spans 498 residues: Neoxanthin synthase, chloroplastic (498 aa).

Residues 1-33 constitute a chloroplast transit peptide; sequence METLLKPLTSLLLSSPTPHRSIFQQNPPSLNPT. The interval 16 to 38 is disordered; that stretch reads PTPHRSIFQQNPPSLNPTTKKKS. The span at 22 to 33 shows a compositional bias: polar residues; it reads IFQQNPPSLNPT. 84–112 lines the NAD(+) pocket; the sequence is VIIIGAGPAGLRLAEHVSKYGIKVCCVDP.

This sequence belongs to the lycopene cyclase family.

It is found in the plastid. The protein resides in the chloroplast. The enzyme catalyses all-trans-violaxanthin = all-trans-neoxanthin. Its pathway is carotenoid biosynthesis; neoxanthin biosynthesis. Functionally, involved in the synthesis of neoxanthin, the last product of carotenoid synthesis and a precursor of abscisic acid. This Solanum tuberosum (Potato) protein is Neoxanthin synthase, chloroplastic (NXS).